The primary structure comprises 457 residues: tRNA modification GTPase MnmE (457 aa).

3 residues coordinate (6S)-5-formyl-5,6,7,8-tetrahydrofolate: arginine 23, glutamate 85, and arginine 124. In terms of domain architecture, TrmE-type G spans 220–376 (GALVVLAGQV…LVTAIRAAVL (157 aa)). Asparagine 230 contributes to the K(+) binding site. GTP contacts are provided by residues 230-235 (NAGKSS), 249-255 (TDLPGTT), and 274-277 (DTAG). Serine 234 is a Mg(2+) binding site. K(+) is bound by residues threonine 249, leucine 251, and threonine 254. Mg(2+) is bound at residue threonine 255. Residue lysine 457 participates in (6S)-5-formyl-5,6,7,8-tetrahydrofolate binding.

Belongs to the TRAFAC class TrmE-Era-EngA-EngB-Septin-like GTPase superfamily. TrmE GTPase family. As to quaternary structure, homodimer. Heterotetramer of two MnmE and two MnmG subunits. It depends on K(+) as a cofactor.

Its subcellular location is the cytoplasm. In terms of biological role, exhibits a very high intrinsic GTPase hydrolysis rate. Involved in the addition of a carboxymethylaminomethyl (cmnm) group at the wobble position (U34) of certain tRNAs, forming tRNA-cmnm(5)s(2)U34. This chain is tRNA modification GTPase MnmE, found in Nitratidesulfovibrio vulgaris (strain ATCC 29579 / DSM 644 / CCUG 34227 / NCIMB 8303 / VKM B-1760 / Hildenborough) (Desulfovibrio vulgaris).